A 462-amino-acid chain; its full sequence is MEKTMEKIVSLAKARGFVYPGSEIYGGLANTWDYGNLGVELKNNVKKAWWQKFVQESPYNVGVDCAILMNPQTWVASGHLGGFSDPLMDCKECHERFRADKLIEDWADENSYDLGGSVDGWTQEQMKNFIDEKNICCPSCGKHNFTDIRQFNLMFKTFQGVTEDAKNTVYLRPETAQGIFVNFKNVQRTSRKKVPFGIGQIGKSFRNEITPGNFTFRTREFEQMELEFFCKPGTDLEWFTYWRQYCIDWLKALGIKEDEMRARDHSPEELCFYSKGTTDIEFLFPFGWGELWGIADRTDYDLTQHQTVSGEDMSYFDDEAKEKYIPYVIEPSLGADRVTLAFLCSAYDEEELEGGDVRTVLHFHPAIAPVKIGILPLSKKLNEGAEKVYAELSKYYNCEFDDRGNIGKRYRRQDEIGTPFCITYDFDSEEDGAVTVRDRDTMQQERIKIADLKAYFEDKFRF.

The substrate site is built by Arg98 and Glu174. ATP is bound by residues 206–208 (RNE), 216–221 (FRTREF), 290–291 (EL), and 334–337 (GADR). Substrate is bound at residue 221-225 (FEQME). 330–334 (EPSLG) lines the substrate pocket.

This sequence belongs to the class-II aminoacyl-tRNA synthetase family. Homodimer.

It localises to the cytoplasm. The catalysed reaction is tRNA(Gly) + glycine + ATP = glycyl-tRNA(Gly) + AMP + diphosphate. Functionally, catalyzes the attachment of glycine to tRNA(Gly). This is Glycine--tRNA ligase from Lachnospira eligens (strain ATCC 27750 / DSM 3376 / VPI C15-48 / C15-B4) (Eubacterium eligens).